A 420-amino-acid polypeptide reads, in one-letter code: Histidine--tRNA ligase (420 aa).

It belongs to the class-II aminoacyl-tRNA synthetase family. Homodimer.

It is found in the cytoplasm. It catalyses the reaction tRNA(His) + L-histidine + ATP = L-histidyl-tRNA(His) + AMP + diphosphate + H(+). The sequence is that of Histidine--tRNA ligase from Clostridioides difficile (strain 630) (Peptoclostridium difficile).